A 540-amino-acid chain; its full sequence is RNA exonuclease 3 (540 aa).

Residues 7–34 (QFKHIVCPFLRTGRKCQSRNCFFSHDFQ) form a C3H1-type zinc finger. The region spanning 382-529 (HCALDCELCY…EDAVSALQLV (148 aa)) is the Exonuclease domain.

It belongs to the REXO1/REXO3 family.

It localises to the cytoplasm. Its subcellular location is the nucleus. Its function is as follows. 3' to 5' exoribonuclease required for proper 3' end maturation of MRP RNA and of the U5L snRNA. This Schizosaccharomyces pombe (strain 972 / ATCC 24843) (Fission yeast) protein is RNA exonuclease 3 (rex3).